Here is a 693-residue protein sequence, read N- to C-terminus: Adhesion G-protein coupled receptor G1 (693 aa).

The signal sequence occupies residues 1–25 (MTPQSLLQTTLFLLSLLFLVQGAHG). Heparin is bound at residue 26–33 (RGHREDFR). Topologically, residues 26–401 (RGHREDFRFC…SVEVDAVHKH (376 aa)) are extracellular. 2 cysteine pairs are disulfide-bonded: C35/C91 and C121/C177. N-linked (GlcNAc...) asparagine glycans are attached at residues N39, N148, and N171. 190-200 (LKHPQKASRRP) serves as a coordination point for heparin. Positions 224-395 (DMVSFEEDRI…AVLMVSSVEV (172 aa)) constitute a GAIN-B domain. N-linked (GlcNAc...) asparagine glycans are attached at residues N234, N303, N324, and N341. Intrachain disulfides connect C346/C377 and C366/C379. The interval 346–395 (CVFWVEDPTLSSPGHWSSAGCETVRRETQTSCFCNHLTYFAVLMVSSVEV) is GPS. A stachel region spans residues 384 to 397 (YFAVLMVSSVEVDA). The helical transmembrane segment at 402–424 (YLSLLSYVGCVVSALACLVTIAA) threads the bilayer. The Cytoplasmic segment spans residues 425–437 (YLCSRVPLPCRRK). A helical transmembrane segment spans residues 438–460 (PRDYTIKVHMNLLLAVFLLDTSF). Residues 461–465 (LLSEP) are Extracellular-facing. The helical transmembrane segment at 466 to 495 (VALTGSEAGCRASAIFLHFSLLTCLSWMGL) threads the bilayer. C475 and C562 are joined by a disulfide. Residues 496 to 510 (EGYNLYRLVVEVFGT) lie on the Cytoplasmic side of the membrane. A helical membrane pass occupies residues 511 to 533 (YVPGYLLKLSAMGWGFPIFLVTL). Over 534-562 (VALVDVDNYGPIILAVHRTPEGVIYPSMC) the chain is Extracellular. A helical transmembrane segment spans residues 563 to 588 (WIRDSLVSYITNLGLFSLVFLFNMAM). Residues 589–602 (LATMVVQILRLRPH) are Cytoplasmic-facing. The chain crosses the membrane as a helical span at residues 603 to 624 (TQKWSHVLTLLGLSLVLGLPWA). Over 625–628 (LIFF) the chain is Extracellular. Residues 629 to 654 (SFASGTFQLVVLYLFSIITSFQGFLI) traverse the membrane as a helical segment. The Cytoplasmic segment spans residues 655 to 693 (FIWYWSMRLQARGGPSPLKSNSDSARLPISSGSTSSSRI). A disordered region spans residues 670 to 693 (SPLKSNSDSARLPISSGSTSSSRI). The segment covering 684-693 (SSGSTSSSRI) has biased composition (low complexity).

Belongs to the G-protein coupled receptor 2 family. LN-TM7 subfamily. As to quaternary structure, heterodimer of 2 chains generated by proteolytic processing; the large extracellular N-terminal fragment (ADGRG1 NT) and the membrane-bound C-terminal fragment (ADGRG1-CT) predominantly remain associated and non-covalently linked. ADGRG1 NT self-associates in a trans-trans manner; the homophilic interaction enhances receptor signaling. Interacts with TGM2. Interacts with heparin; leading to the reduction of ADGRG1 shedding. Interacts with COL3A1. Part of a GPCR-tetraspanin complex at least consisting of ADGRG1, CD81, eventually CD9, and GNA11 in which CD81 is enhancing the association of ADGRG1 with GNA11. Post-translationally, autoproteolytically cleaved into 2 fragments; the large extracellular N-terminal fragment (ADGRG1 NT) and the membrane-bound C-terminal fragment (ADGRG1 CT) predominantly remain associated and non-covalently linked. Shedding to yield the secreted ADGRG1 N-terminal fragment seems to involve metalloprotease(s). In terms of processing, N-glycosylated. Contains sialic acid residues. Ubiquitinated. Undergoes polyubiquitination upon activation. In terms of tissue distribution, widely distributed with highest levels found in thyroid gland, brain and heart. Expressed in a great number of tumor cells. Expression is down-regulated in different tumors from highly metastatic cells.

It is found in the cell membrane. The protein localises to the secreted. Its subcellular location is the membrane raft. Its activity is regulated as follows. Forms a heterodimer of 2 chains generated by proteolytic processing that remain associated through non-covalent interactions mediated by the GAIN-B domain. In the inactivated receptor, the Stachel sequence (also named stalk) is embedded in the GAIN-B domain, where it adopts a beta-strand conformation. On activation, the Stachel moves into the 7 transmembrane region and adopts a twisted hook-shaped configuration that forms contacts within the receptor, leading to coupling of a G-alpha protein, which activates signaling. The cleaved GAIN-B and N-terminal domains can then dissociate from the rest of the receptor. Functionally, adhesion G-protein coupled receptor (aGPCR) for steroid hormone 17alpha-hydroxypregnenolone (17-OH), which is involved in cell adhesion and cell-cell interactions. Ligand binding causes a conformation change that triggers signaling via guanine nucleotide-binding proteins (G proteins) and modulates the activity of downstream effectors, such as RhoA pathway. ADGRG1 is coupled to G(12) and/or G(13) G proteins (GNA12 and GNA13, respectively) and mediates the activation Rho small GTPases. Acts as a potent suppressor of ferroptosis: binding to 17-OH-binding initiates signaling that down-regulates CD36 and alleviates ferroptosis-induced liver injury. Ligand-binding also induces cell adhesion activity via association with proteins such as collagen III/COL3A1 and TGM2. Mediates cell matrix adhesion in developing neurons and hematopoietic stem cells. Involved in cortical development, specifically in maintenance of the pial basement membrane integrity and in cortical lamination: association with COL3A1 in the developing brain inhibits neuronal migration via activation of the RhoA pathway. Together with TGM2, acts as a regulator of myelination and myelin repair in oligodendrocyte precursor cells. Acts as a hemostatic sensor of shear force: G protein-coupled receptor signaling is activated in response to shear force in platelets, promoting G(13) G protein signaling, and platelet shape change and aggregation in a COL3A1-dependent manner. Acts as an inhibitor of VEGFA production thereby inhibiting angiogenesis through a signaling pathway mediated by PRKCA. Plays a role in the maintenance of hematopoietic stem cells in bone marrow niche. Plays an essential role in testis development. The protein is Adhesion G-protein coupled receptor G1 of Homo sapiens (Human).